A 273-amino-acid polypeptide reads, in one-letter code: MKKTQTWIITCIYLQLLLFNPLVKTQEICRNPVTDNVKDITKLVANLPNDYMITLNYVAGMDVLPSHCWLRDMVTHLSVSLTTLLDKFSNISEGLSNYSIIDKLGKIVDDLVACMEENAPKNVKESLKKPETRNFTPEEFFSIFNRSIDAFKDFMVASDTSDCVLSSTLGPEKDSRVSVTKPFMLPPVAASSLRNDSSSSNRKAAKSPEDPGLQWTAMALPALISLVIGFAFGALYWKKKQSSLTRAVENIQINEEDNEISMLQQKEREFQEV.

Residues 1 to 25 (MKKTQTWIITCIYLQLLLFNPLVKT) form the signal peptide. Pyrrolidone carboxylic acid is present on glutamine 26. Residues 26–214 (QEICRNPVTD…AKSPEDPGLQ (189 aa)) lie on the Extracellular side of the membrane. 2 disulfides stabilise this stretch: cysteine 29-cysteine 114 and cysteine 68-cysteine 163. A glycan (N-linked (GlcNAc...) asparagine; partial) is linked at asparagine 90. N-linked (GlcNAc...) asparagine glycosylation occurs at asparagine 145. Serine 167 carries an O-linked (GalNAc...) serine glycan. Residues threonine 168 and threonine 180 are each glycosylated (O-linked (GalNAc...) threonine). Positions 190-211 (ASSLRNDSSSSNRKAAKSPEDP) are disordered. Residues 191 to 202 (SSLRNDSSSSNR) show a composition bias toward low complexity. Residue asparagine 195 is glycosylated (N-linked (GlcNAc...) asparagine). A helical transmembrane segment spans residues 215 to 237 (WTAMALPALISLVIGFAFGALYW). Residues 238–273 (KKKQSSLTRAVENIQINEEDNEISMLQQKEREFQEV) are Cytoplasmic-facing.

This sequence belongs to the SCF family. In terms of assembly, homodimer, non-covalently linked. Heterotetramer with KIT, binding two KIT molecules; thereby mediates KIT dimerization and subsequent activation by autophosphorylation. In terms of processing, a soluble form is produced by proteolytic processing of isoform 1 in the extracellular domain. Post-translationally, the identity of N- and O-linked saccharides is not reported in PubMed:1708771. The O-linked polysaccharides are probably the mucin type linked to GalNAc.

Its subcellular location is the cell membrane. It localises to the cytoplasm. The protein localises to the cytoskeleton. It is found in the cell projection. The protein resides in the lamellipodium. Its subcellular location is the filopodium. It localises to the secreted. Its function is as follows. Ligand for the receptor-type protein-tyrosine kinase KIT. Plays an essential role in the regulation of cell survival and proliferation, hematopoiesis, stem cell maintenance, gametogenesis, mast cell development, migration and function, and in melanogenesis. KITLG/SCF binding can activate several signaling pathways. Promotes phosphorylation of PIK3R1, the regulatory subunit of phosphatidylinositol 3-kinase, and subsequent activation of the kinase AKT1. KITLG/SCF and KIT also transmit signals via GRB2 and activation of RAS, RAF1 and the MAP kinases MAPK1/ERK2 and/or MAPK3/ERK1. KITLG/SCF and KIT promote activation of STAT family members STAT1, STAT3 and STAT5. KITLG/SCF and KIT promote activation of PLCG1, leading to the production of the cellular signaling molecules diacylglycerol and inositol 1,4,5-trisphosphate. KITLG/SCF acts synergistically with other cytokines, probably interleukins. This Rattus norvegicus (Rat) protein is Kit ligand (Kitlg).